A 366-amino-acid chain; its full sequence is Eukaryotic translation initiation factor 3 subunit H (366 aa).

In terms of domain architecture, MPN spans 12–161 (VKVEALVVMK…LRAFRLSPKF (150 aa)).

The protein belongs to the eIF-3 subunit H family. In terms of assembly, component of the eukaryotic translation initiation factor 3 (eIF-3) complex.

Its subcellular location is the cytoplasm. In terms of biological role, component of the eukaryotic translation initiation factor 3 (eIF-3) complex, which is involved in protein synthesis of a specialized repertoire of mRNAs and, together with other initiation factors, stimulates binding of mRNA and methionyl-tRNAi to the 40S ribosome. The eIF-3 complex specifically targets and initiates translation of a subset of mRNAs involved in cell proliferation. The polypeptide is Eukaryotic translation initiation factor 3 subunit H (Emericella nidulans (strain FGSC A4 / ATCC 38163 / CBS 112.46 / NRRL 194 / M139) (Aspergillus nidulans)).